We begin with the raw amino-acid sequence, 293 residues long: 4-hydroxy-tetrahydrodipicolinate synthase (293 aa).

Thr45 serves as a coordination point for pyruvate. Tyr133 acts as the Proton donor/acceptor in catalysis. The active-site Schiff-base intermediate with substrate is Lys162. Ile204 provides a ligand contact to pyruvate.

This sequence belongs to the DapA family. Homotetramer; dimer of dimers.

Its subcellular location is the cytoplasm. It catalyses the reaction L-aspartate 4-semialdehyde + pyruvate = (2S,4S)-4-hydroxy-2,3,4,5-tetrahydrodipicolinate + H2O + H(+). The protein operates within amino-acid biosynthesis; L-lysine biosynthesis via DAP pathway; (S)-tetrahydrodipicolinate from L-aspartate: step 3/4. Functionally, catalyzes the condensation of (S)-aspartate-beta-semialdehyde [(S)-ASA] and pyruvate to 4-hydroxy-tetrahydrodipicolinate (HTPA). The protein is 4-hydroxy-tetrahydrodipicolinate synthase of Brucella abortus biovar 1 (strain 9-941).